Reading from the N-terminus, the 383-residue chain is Na(+)/H(+) antiporter NhaA (383 aa).

The next 11 helical transmembrane spans lie at 21 to 41, 56 to 76, 94 to 114, 123 to 143, 152 to 172, 175 to 195, 202 to 222, 258 to 278, 287 to 307, 326 to 346, and 355 to 375; these read AAGVMLMAASAIGMVFANSIW, LTMRGWINDALMALFFLLAGL, LLPGVAAIGGMVVPAIIYVAF, GWAIPTATDIAFALGVLALAG, VFLTALAIVDDLGAVIVIALF, GTLSVLPGAGVAAILGLLLML, TLFPYLLAGVPLWWLTLKSGI, FVILPLFGFANAGISLHGVTV, LGVGAALMLGKPLGVLGAVSI, IGIAFLCGIGFTMSLFIAILA, and QIKLGILSGSMLSGLCGYILL.

This sequence belongs to the NhaA Na(+)/H(+) (TC 2.A.33) antiporter family.

The protein resides in the cell inner membrane. The catalysed reaction is Na(+)(in) + 2 H(+)(out) = Na(+)(out) + 2 H(+)(in). Na(+)/H(+) antiporter that extrudes sodium in exchange for external protons. This Granulibacter bethesdensis (strain ATCC BAA-1260 / CGDNIH1) protein is Na(+)/H(+) antiporter NhaA.